The sequence spans 335 residues: Tetraacyldisaccharide 4'-kinase (335 aa).

58 to 65 provides a ligand contact to ATP; sequence TVGGNGKT.

This sequence belongs to the LpxK family.

It catalyses the reaction a lipid A disaccharide + ATP = a lipid IVA + ADP + H(+). It functions in the pathway glycolipid biosynthesis; lipid IV(A) biosynthesis; lipid IV(A) from (3R)-3-hydroxytetradecanoyl-[acyl-carrier-protein] and UDP-N-acetyl-alpha-D-glucosamine: step 6/6. Functionally, transfers the gamma-phosphate of ATP to the 4'-position of a tetraacyldisaccharide 1-phosphate intermediate (termed DS-1-P) to form tetraacyldisaccharide 1,4'-bis-phosphate (lipid IVA). The sequence is that of Tetraacyldisaccharide 4'-kinase from Dichelobacter nodosus (strain VCS1703A).